We begin with the raw amino-acid sequence, 346 residues long: MDNVIGLEIIEVVEQAAIASALWMGKGEKDTADAVAVDAMRNRMNQIHMRGRIVIGEGERDDAPMLYIGEQVGICTQENAAEFCTLDELIEIDIAVDPCEGTNLVAYGQNGSMAVLAISEKGGLFAAPDFYMKKLAAPPAAKGKVDIRKSATENLQIIAECLDRSISELVVVVMKRARHDGLIKEIREAGARVRLIEDGDVSAALSCAFSGTNIHALMGIGAAPEGVISAAAMRALGGHFQGQLIYDPEIVQTGLIGESKESNLARLKEMGIDDPDRIYEAEELACGETVLFAACGITPGTLMKGARFFPGGVRTESLIISTQSKTVRFVDTIHKLDDKHRALQLH.

4 residues coordinate Mn(2+): Asp33, Glu57, Asp97, and Glu100. Substrate contacts are provided by residues 100–102 (EGT), Tyr131, 176–178 (RAR), and 198–200 (DGD). Glu225 is a binding site for Mn(2+).

The protein belongs to the FBPase class 2 family. As to quaternary structure, homotetramer. Mn(2+) serves as cofactor.

The catalysed reaction is beta-D-fructose 1,6-bisphosphate + H2O = beta-D-fructose 6-phosphate + phosphate. It catalyses the reaction D-sedoheptulose 1,7-bisphosphate + H2O = D-sedoheptulose 7-phosphate + phosphate. It functions in the pathway carbohydrate biosynthesis; Calvin cycle. Its function is as follows. Catalyzes the hydrolysis of fructose 1,6-bisphosphate (Fru 1,6-P2) and sedoheptulose 1,7-bisphosphate (Sed 1,7-P2) to fructose 6-phosphate and sedoheptulose 7-phosphate, respectively. In Acaryochloris marina (strain MBIC 11017), this protein is D-fructose 1,6-bisphosphatase class 2/sedoheptulose 1,7-bisphosphatase 1.